Here is a 211-residue protein sequence, read N- to C-terminus: Putative 3-methyladenine DNA glycosylase (211 aa).

The protein belongs to the DNA glycosylase MPG family.

This is Putative 3-methyladenine DNA glycosylase from Granulibacter bethesdensis (strain ATCC BAA-1260 / CGDNIH1).